Here is a 467-residue protein sequence, read N- to C-terminus: MTTGKIVQIIGAVVDVEFPQGEVPRVYDALNVVDAQERLVLEVQQQIGGGVVRCIVMGSSDGLRRGLTVENTGAPISVPVGTKTLGRIMNVLGDAIDECGDIDAEEHYAIHREAPSYEEQSNSTELLETGVKVIDLVCPFAKGGKIGLFGGAGVGKTVNMMELINNIALQHSGLSVFAGVGERTREGNDFYFEMQEAGVVNIEKPEESKVAMVYGQMNEPPGNRLRVALTGLTMAERFRDEGRDVLLFVDNIYRYTLAGTEVSALLGRMPSAVGYQPTLAEEMGVLQERITSTKQGSITSVQAVYVPADDLTDPSPATTFAHLDATVVLNRNIAAMGLYPAIDPLDSTSRQLDPLVVGQEHYDIARGVQSTLQRYKELKDIIAILGMDELSEEDKQVVSRARKIEKFLTQPYHVAEVFTGDPGIYVPLKDTLAGFKGLLAGDYDDVPEQAFMYCGKIEDALEKAKKL.

150–157 (GGAGVGKT) contacts ATP.

This sequence belongs to the ATPase alpha/beta chains family. F-type ATPases have 2 components, CF(1) - the catalytic core - and CF(0) - the membrane proton channel. CF(1) has five subunits: alpha(3), beta(3), gamma(1), delta(1), epsilon(1). CF(0) has three main subunits: a(1), b(2) and c(9-12). The alpha and beta chains form an alternating ring which encloses part of the gamma chain. CF(1) is attached to CF(0) by a central stalk formed by the gamma and epsilon chains, while a peripheral stalk is formed by the delta and b chains.

The protein localises to the cell inner membrane. The catalysed reaction is ATP + H2O + 4 H(+)(in) = ADP + phosphate + 5 H(+)(out). Functionally, produces ATP from ADP in the presence of a proton gradient across the membrane. The catalytic sites are hosted primarily by the beta subunits. This Aliivibrio fischeri (strain ATCC 700601 / ES114) (Vibrio fischeri) protein is ATP synthase subunit beta.